The chain runs to 332 residues: 2,3-diketo-L-gulonate reductase (332 aa).

The Proton donor role is filled by His44. NAD(+) contacts are provided by residues 168 to 174 (ITMVDMS), 224 to 225 (WK), and 304 to 306 (GHE).

The protein belongs to the LDH2/MDH2 oxidoreductase family. DlgD subfamily. As to quaternary structure, homodimer.

The protein localises to the cytoplasm. It catalyses the reaction 3-dehydro-L-gulonate + NAD(+) = 2,3-dioxo-L-gulonate + NADH + H(+). It carries out the reaction 3-dehydro-L-gulonate + NADP(+) = 2,3-dioxo-L-gulonate + NADPH + H(+). Its function is as follows. Catalyzes the reduction of 2,3-diketo-L-gulonate in the presence of NADH, to form 3-keto-L-gulonate. In Salmonella paratyphi B (strain ATCC BAA-1250 / SPB7), this protein is 2,3-diketo-L-gulonate reductase.